The sequence spans 138 residues: MMSNSQISKLFSSISNKENSNENALKESTNKQLNNANTLAITHLKEQLSREVQRREELEGLLEQSQKEMEDLSVSLFTEANEMVAKARQDTEVLKRELDYLRAKEKGRIGKLRSIQTAVRTSIEARKLLSYSNESNYH.

The segment covering 1-11 (MMSNSQISKLF) has biased composition (polar residues). The tract at residues 1–31 (MMSNSQISKLFSSISNKENSNENALKESTNK) is disordered. A compositionally biased stretch (low complexity) spans 12–23 (SSISNKENSNEN). A coiled-coil region spans residues 16 to 104 (NKENSNENAL…KRELDYLRAK (89 aa)).

In terms of assembly, interacts with spo2.

The protein localises to the cytoplasm. It is found in the cytoskeleton. Its subcellular location is the microtubule organizing center. It localises to the spindle pole body. In terms of biological role, involved in sporulation. Plays a significant role in modification of the spindle pole body prior to spore formation and is required for initiating forespore membrane formation. This is Sporulation-specific protein 13 (spo13) from Schizosaccharomyces pombe (strain 972 / ATCC 24843) (Fission yeast).